The sequence spans 801 residues: DNA mismatch repair protein MutS (801 aa).

An ATP-binding site is contributed by Gly590–Ser597.

This sequence belongs to the DNA mismatch repair MutS family.

In terms of biological role, this protein is involved in the repair of mismatches in DNA. It is possible that it carries out the mismatch recognition step. This protein has a weak ATPase activity. This Thermotoga neapolitana (strain ATCC 49049 / DSM 4359 / NBRC 107923 / NS-E) protein is DNA mismatch repair protein MutS.